Reading from the N-terminus, the 117-residue chain is Mediator of RNA polymerase II transcription subunit 11 (117 aa).

Alanine 2 bears the N-acetylalanine mark.

It belongs to the Mediator complex subunit 11 family. As to quaternary structure, component of the Mediator complex, which is composed of MED1, MED4, MED6, MED7, MED8, MED9, MED10, MED11, MED12, MED13, MED13L, MED14, MED15, MED16, MED17, MED18, MED19, MED20, MED21, MED22, MED23, MED24, MED25, MED26, MED27, MED29, MED30, MED31, CCNC, CDK8 and CDC2L6/CDK11. The MED12, MED13, CCNC and CDK8 subunits form a distinct module termed the CDK8 module. Mediator containing the CDK8 module is less active than Mediator lacking this module in supporting transcriptional activation. Individual preparations of the Mediator complex lacking one or more distinct subunits have been variously termed ARC, CRSP, DRIP, PC2, SMCC and TRAP. Expressed in cochlea.

The protein localises to the nucleus. Functionally, component of the Mediator complex, a coactivator involved in the regulated transcription of nearly all RNA polymerase II-dependent genes. Mediator functions as a bridge to convey information from gene-specific regulatory proteins to the basal RNA polymerase II transcription machinery. Mediator is recruited to promoters by direct interactions with regulatory proteins and serves as a scaffold for the assembly of a functional pre-initiation complex with RNA polymerase II and the general transcription factors. The polypeptide is Mediator of RNA polymerase II transcription subunit 11 (Med11) (Mus musculus (Mouse)).